The chain runs to 420 residues: MEGDMVAKVKRETVVACMTCPLCDKLLRDATTISECLHTFCRKCIYEKITEDEIESCPVCDIDLGGTPLEKLRPDHILQDLRAKLFPLKRKKERAPEVVSSISLPAKRKERSISSLVVSTPRVSAQAGTTGKRTKAATRKDVRGSGSFTKRTVKKEEEFGDDHVESASSPETLKKFTQNKRQSSYANPNQSLSNRRNKDVDEPWDSKLHLWKPLNFLVDVANGTKDPKSELGNASHNDVQGSKTKTKDHKRKCKLEEEISNNGDPTTSETATLKRTRRTRRKRSSTFGDSRIPLLPGAASLKQERRNGHVWFSLVASSNQEGEASLPQIPANYLRIRDGNIPVSFIQKYLMRKLDLKSEDEVEITCMGEPVIPTLQLHSLVDLWLETTSKHQRVAASIGSSAKEFVMVLVYSRKLPECNN.

Residues 20–61 (CPLCDKLLRDATTISECLHTFCRKCIYEKITEDEIESCPVCD) form an RING-type zinc finger. Positions 113 to 123 (ISSLVVSTPRV) are enriched in polar residues. Disordered regions lie at residues 113 to 201 (ISSL…KDVD) and 226 to 289 (DPKS…TFGD). Residues 154–165 (KKEEEFGDDHVE) are compositionally biased toward basic and acidic residues. 2 stretches are compositionally biased toward polar residues: residues 166–194 (SASS…SLSN) and 232–242 (GNASHNDVQGS). Positions 244 to 253 (TKTKDHKRKC) are enriched in basic residues. A compositionally biased stretch (polar residues) spans 260–273 (SNNGDPTTSETATL). Residues 274 to 284 (KRTRRTRRKRS) are compositionally biased toward basic residues.

In terms of assembly, interacts with DREB2A. Auto-ubiquitinated. In terms of tissue distribution, expressed in roots, leaves and flowers.

The catalysed reaction is S-ubiquitinyl-[E2 ubiquitin-conjugating enzyme]-L-cysteine + [acceptor protein]-L-lysine = [E2 ubiquitin-conjugating enzyme]-L-cysteine + N(6)-ubiquitinyl-[acceptor protein]-L-lysine.. Its pathway is protein modification; protein ubiquitination. In terms of biological role, E3 ubiquitin-protein ligase that acts as a negative regulator of the response to water stress. Mediates ubiquitination and subsequent proteasomal degradation of the drought-induced transcriptional activator DREB2A. Functionally redundant with DRIP1. The chain is E3 ubiquitin protein ligase DRIP2 (DRIP2) from Arabidopsis thaliana (Mouse-ear cress).